A 187-amino-acid chain; its full sequence is Probable RNA 2'-phosphotransferase (187 aa).

Belongs to the KptA/TPT1 family.

In terms of biological role, removes the 2'-phosphate from RNA via an intermediate in which the phosphate is ADP-ribosylated by NAD followed by a presumed transesterification to release the RNA and generate ADP-ribose 1''-2''-cyclic phosphate (APPR&gt;P). May function as an ADP-ribosylase. The protein is Probable RNA 2'-phosphotransferase of Pseudomonas syringae pv. tomato (strain ATCC BAA-871 / DC3000).